The following is a 144-amino-acid chain: Small ribosomal subunit protein eS17 (144 aa).

This sequence belongs to the eukaryotic ribosomal protein eS17 family.

In Solanum lycopersicum (Tomato), this protein is Small ribosomal subunit protein eS17 (RPS17).